Reading from the N-terminus, the 426-residue chain is Protein TolB homolog (426 aa).

A signal peptide spans 1-19; that stretch reads MFLRSFLCLLCLLPSILYC.

It belongs to the TolB family.

Its subcellular location is the periplasm. This chain is Protein TolB homolog, found in Chlamydia muridarum (strain MoPn / Nigg).